The primary structure comprises 340 residues: Alcohol dehydrogenase (340 aa).

Zn(2+)-binding residues include Cys-37, His-58, Cys-89, Cys-92, Cys-95, Cys-103, and Cys-145.

Belongs to the zinc-containing alcohol dehydrogenase family. It depends on Zn(2+) as a cofactor.

It catalyses the reaction a primary alcohol + NAD(+) = an aldehyde + NADH + H(+). It carries out the reaction a secondary alcohol + NAD(+) = a ketone + NADH + H(+). This Staphylococcus epidermidis (strain ATCC 12228 / FDA PCI 1200) protein is Alcohol dehydrogenase (adh).